A 597-amino-acid polypeptide reads, in one-letter code: Probable translation initiation factor IF-2 (597 aa).

Positions 10–226 constitute a tr-type G domain; it reads LRTPIVAVLG…LMGLSQRFMK (217 aa). The G1 stretch occupies residues 19–26; it reads GHVDHGKT. 19–26 is a GTP binding site; sequence GHVDHGKT. Positions 44-48 are G2; that stretch reads AITQH. The interval 81–84 is G3; the sequence is DTPG. GTP-binding positions include 81-85 and 135-138; these read DTPGH and NKVD. A G4 region spans residues 135–138; that stretch reads NKVD. Positions 203-205 are G5; that stretch reads SAI.

This sequence belongs to the TRAFAC class translation factor GTPase superfamily. Classic translation factor GTPase family. IF-2 subfamily.

Its function is as follows. Function in general translation initiation by promoting the binding of the formylmethionine-tRNA to ribosomes. Seems to function along with eIF-2. This is Probable translation initiation factor IF-2 from Halorubrum lacusprofundi (strain ATCC 49239 / DSM 5036 / JCM 8891 / ACAM 34).